The sequence spans 297 residues: 4-hydroxy-tetrahydrodipicolinate synthase (297 aa).

Thr50 lines the pyruvate pocket. Tyr138 (proton donor/acceptor) is an active-site residue. Lys166 serves as the catalytic Schiff-base intermediate with substrate. Ile208 contributes to the pyruvate binding site.

This sequence belongs to the DapA family. Homotetramer; dimer of dimers.

The protein resides in the cytoplasm. It carries out the reaction L-aspartate 4-semialdehyde + pyruvate = (2S,4S)-4-hydroxy-2,3,4,5-tetrahydrodipicolinate + H2O + H(+). Its pathway is amino-acid biosynthesis; L-lysine biosynthesis via DAP pathway; (S)-tetrahydrodipicolinate from L-aspartate: step 3/4. In terms of biological role, catalyzes the condensation of (S)-aspartate-beta-semialdehyde [(S)-ASA] and pyruvate to 4-hydroxy-tetrahydrodipicolinate (HTPA). The chain is 4-hydroxy-tetrahydrodipicolinate synthase from Haemophilus ducreyi (strain 35000HP / ATCC 700724).